A 71-amino-acid chain; its full sequence is Beta-defensin 124 (71 aa).

The first 22 residues, 1–22 (MTQLLLFLVALLVLGHVPSGRS), serve as a signal peptide directing secretion. 3 disulfides stabilise this stretch: cysteine 27/cysteine 54, cysteine 34/cysteine 48, and cysteine 38/cysteine 55.

Belongs to the beta-defensin family.

Its subcellular location is the secreted. Has antibacterial activity. This Homo sapiens (Human) protein is Beta-defensin 124 (DEFB124).